Consider the following 150-residue polypeptide: UPF0178 protein Shewana3_1627 (150 aa).

It belongs to the UPF0178 family.

This is UPF0178 protein Shewana3_1627 from Shewanella sp. (strain ANA-3).